The following is a 225-amino-acid chain: UPF0758 protein Mhun_2739 (225 aa).

In terms of domain architecture, MPN spans 102 to 225 (RITEPDHILK…VTSLRSLGYL (124 aa)). H174, H176, and D187 together coordinate Zn(2+). The short motif at 174–187 (HNHPSGNPEPSSED) is the JAMM motif element.

Belongs to the UPF0758 family.

The polypeptide is UPF0758 protein Mhun_2739 (Methanospirillum hungatei JF-1 (strain ATCC 27890 / DSM 864 / NBRC 100397 / JF-1)).